The chain runs to 58 residues: Small ribosomal subunit protein bS21 (58 aa).

It belongs to the bacterial ribosomal protein bS21 family.

The protein is Small ribosomal subunit protein bS21 of Synechococcus sp. (strain CC9605).